We begin with the raw amino-acid sequence, 137 residues long: Small ribosomal subunit protein bS16m (137 aa).

A mitochondrion-targeting transit peptide spans 1 to 34; sequence MVHLTTLLCKAYRGGHLTIRLALGGCTNRPFYRI. Threonine 130 carries the post-translational modification Phosphothreonine.

The protein belongs to the bacterial ribosomal protein bS16 family. Component of the mitochondrial small ribosomal subunit (mt-SSU). Mature mammalian 55S mitochondrial ribosomes consist of a small (28S) and a large (39S) subunit. The 28S small subunit contains a 12S ribosomal RNA (12S mt-rRNA) and 30 different proteins. The 39S large subunit contains a 16S rRNA (16S mt-rRNA), a copy of mitochondrial valine transfer RNA (mt-tRNA(Val)), which plays an integral structural role, and 52 different proteins. bS16m has a zinc binding site.

The protein localises to the mitochondrion. The chain is Small ribosomal subunit protein bS16m (MRPS16) from Homo sapiens (Human).